A 259-amino-acid polypeptide reads, in one-letter code: Phosphate import ATP-binding protein PstB (259 aa).

The ABC transporter domain maps to 11–254 (AESKNLNFYY…PDNPRTEDYI (244 aa)). Position 43–50 (43–50 (GPSGCGKS)) interacts with ATP.

Belongs to the ABC transporter superfamily. Phosphate importer (TC 3.A.1.7) family. As to quaternary structure, the complex is composed of two ATP-binding proteins (PstB), two transmembrane proteins (PstC and PstA) and a solute-binding protein (PstS).

The protein localises to the cell inner membrane. It carries out the reaction phosphate(out) + ATP + H2O = ADP + 2 phosphate(in) + H(+). In terms of biological role, part of the ABC transporter complex PstSACB involved in phosphate import. Responsible for energy coupling to the transport system. In Geobacter sulfurreducens (strain ATCC 51573 / DSM 12127 / PCA), this protein is Phosphate import ATP-binding protein PstB.